A 126-amino-acid polypeptide reads, in one-letter code: Large ribosomal subunit protein mL55 (126 aa).

The transit peptide at 1–34 (MSAKGSLLRLLWQCGMTRAAPESCRYLYTSSWRA) directs the protein to the mitochondrion. Ser-86 carries the phosphoserine modification.

The protein belongs to the mitochondrion-specific ribosomal protein mL55 family. As to quaternary structure, component of the mitochondrial ribosome large subunit (39S) which comprises a 16S rRNA and about 50 distinct proteins.

It localises to the mitochondrion. The polypeptide is Large ribosomal subunit protein mL55 (MRPL55) (Bos taurus (Bovine)).